A 412-amino-acid chain; its full sequence is Pyruvate dehydrogenase E1 component subunit alpha, mitochondrial (412 aa).

H104, Y130, R131, A169, G177, V179, D208, G209, A210, N237, and Y239 together coordinate pyruvate. Residues Y130 and R131 each contribute to the thiamine diphosphate site. Residues G177, V179, D208, G209, A210, and N237 each contribute to the thiamine diphosphate site. D208 is a binding site for Mg(2+). Mg(2+)-binding residues include N237 and Y239. H304 serves as a coordination point for thiamine diphosphate.

Tetramer of 2 alpha and 2 beta subunits. Requires thiamine diphosphate as cofactor. It depends on Mg(2+) as a cofactor.

The protein localises to the mitochondrion matrix. The catalysed reaction is N(6)-[(R)-lipoyl]-L-lysyl-[protein] + pyruvate + H(+) = N(6)-[(R)-S(8)-acetyldihydrolipoyl]-L-lysyl-[protein] + CO2. Its activity is regulated as follows. E1 activity is regulated by phosphorylation (inactivation) and dephosphorylation (activation) of the alpha subunit. Functionally, the pyruvate dehydrogenase complex catalyzes the overall conversion of pyruvate to acetyl-CoA and CO(2). It contains multiple copies of three enzymatic components: pyruvate dehydrogenase (E1), dihydrolipoamide acetyltransferase (E2) and lipoamide dehydrogenase (E3). This chain is Pyruvate dehydrogenase E1 component subunit alpha, mitochondrial (PDA1), found in Kluyveromyces lactis (strain ATCC 8585 / CBS 2359 / DSM 70799 / NBRC 1267 / NRRL Y-1140 / WM37) (Yeast).